The chain runs to 245 residues: NADH-quinone oxidoreductase subunit C (245 aa).

Basic and acidic residues predominate over residues 1-10 (MNAPQDRTDD). Disordered stretches follow at residues 1–54 (MNAP…GYGG) and 217–245 (QRKD…RSYQ). A compositionally biased stretch (low complexity) spans 11 to 28 (GGVPVPVTPAGATGGAPA). Over residues 39–54 (GMFGDQGTGDVSGYGG) the composition is skewed to gly residues.

Belongs to the complex I 30 kDa subunit family. As to quaternary structure, NDH-1 is composed of 14 different subunits. Subunits NuoB, C, D, E, F, and G constitute the peripheral sector of the complex.

It localises to the cell membrane. It carries out the reaction a quinone + NADH + 5 H(+)(in) = a quinol + NAD(+) + 4 H(+)(out). In terms of biological role, NDH-1 shuttles electrons from NADH, via FMN and iron-sulfur (Fe-S) centers, to quinones in the respiratory chain. The immediate electron acceptor for the enzyme in this species is believed to be a menaquinone. Couples the redox reaction to proton translocation (for every two electrons transferred, four hydrogen ions are translocated across the cytoplasmic membrane), and thus conserves the redox energy in a proton gradient. The sequence is that of NADH-quinone oxidoreductase subunit C from Salinispora arenicola (strain CNS-205).